A 122-amino-acid chain; its full sequence is MDYEFKKNTLDGTYHANFSMGHEAMGRWLVEDVAKDTELLAELYKQIAAVKNTQDEWKLSGKVMTLVLTDQEVIVQENALFENSEEEFEEDIHIYDDECISVCGLEDFETMLQSWEAFIRRF.

The protein belongs to the UPF0231 family.

This chain is UPF0231 protein VSAL_I2591, found in Aliivibrio salmonicida (strain LFI1238) (Vibrio salmonicida (strain LFI1238)).